A 145-amino-acid chain; its full sequence is Large ribosomal subunit protein uL11 (145 aa).

It belongs to the universal ribosomal protein uL11 family. Part of the ribosomal stalk of the 50S ribosomal subunit. Interacts with L10 and the large rRNA to form the base of the stalk. L10 forms an elongated spine to which L12 dimers bind in a sequential fashion forming a multimeric L10(L12)X complex. One or more lysine residues are methylated.

Forms part of the ribosomal stalk which helps the ribosome interact with GTP-bound translation factors. In Porphyromonas gingivalis (strain ATCC 33277 / DSM 20709 / CIP 103683 / JCM 12257 / NCTC 11834 / 2561), this protein is Large ribosomal subunit protein uL11.